We begin with the raw amino-acid sequence, 256 residues long: Tryptophan synthase alpha chain (256 aa).

Active-site proton acceptor residues include E46 and D57.

It belongs to the TrpA family. Tetramer of two alpha and two beta chains.

It carries out the reaction (1S,2R)-1-C-(indol-3-yl)glycerol 3-phosphate + L-serine = D-glyceraldehyde 3-phosphate + L-tryptophan + H2O. It participates in amino-acid biosynthesis; L-tryptophan biosynthesis; L-tryptophan from chorismate: step 5/5. Functionally, the alpha subunit is responsible for the aldol cleavage of indoleglycerol phosphate to indole and glyceraldehyde 3-phosphate. The protein is Tryptophan synthase alpha chain of Bacteroides thetaiotaomicron (strain ATCC 29148 / DSM 2079 / JCM 5827 / CCUG 10774 / NCTC 10582 / VPI-5482 / E50).